Here is a 520-residue protein sequence, read N- to C-terminus: GMP synthase [glutamine-hydrolyzing] (520 aa).

Residues 12–205 (KIIVLDYGSQ…AISICGARGD (194 aa)) form the Glutamine amidotransferase type-1 domain. The active-site Nucleophile is the C89. Catalysis depends on residues H179 and E181. In terms of domain architecture, GMPS ATP-PPase spans 206–395 (WSMDNFIDME…LGMPEEIVWR (190 aa)). 233–239 (SGGVDSS) serves as a coordination point for ATP.

As to quaternary structure, homodimer.

The catalysed reaction is XMP + L-glutamine + ATP + H2O = GMP + L-glutamate + AMP + diphosphate + 2 H(+). It functions in the pathway purine metabolism; GMP biosynthesis; GMP from XMP (L-Gln route): step 1/1. Its function is as follows. Catalyzes the synthesis of GMP from XMP. This is GMP synthase [glutamine-hydrolyzing] from Streptococcus pyogenes serotype M6 (strain ATCC BAA-946 / MGAS10394).